Consider the following 421-residue polypeptide: F-box only protein 9 (421 aa).

A disordered region spans residues 1–63 (MAESNQNTDG…AELRRRQETA (63 aa)). Residues 11–20 (AVEEGEDENT) show a composition bias toward acidic residues. Polar residues predominate over residues 40–52 (LQPSSGGQRSFSR). Residues 54–63 (AELRRRQETA) show a composition bias toward basic and acidic residues. The TPR repeat unit spans residues 68 to 101 (ARELFLKAVEEEQNGAVYEAIKYYKSAMQLVPDI). One can recognise an F-box domain in the interval 158-209 (QVHISALPFEVLMYIFRWVVSCDLDLRALEQLSLVCRGFYICARDPEIWRSA).

In terms of assembly, part of the SCF (SKP1-CUL1-F-box) E3 ubiquitin-protein ligase complex SCF(fbxo9).

It is found in the cytoplasm. The protein operates within protein modification; protein ubiquitination. Substrate recognition component of a SCF (SKP1-CUL1-F-box protein) E3 ubiquitin-protein ligase complex which mediates the ubiquitination and subsequent proteasomal degradation of target proteins and acts as a regulator of mTOR signaling. The sequence is that of F-box only protein 9 (fbxo9) from Danio rerio (Zebrafish).